The sequence spans 524 residues: Importin subunit alpha-1 (524 aa).

The segment at 1–42 is disordered; it reads MGDEFRPSHEERSKMYKSNVRDQNEMRRKRREDEVQIRKNRR. The IBB domain maps to 1–59; that stretch reads MGDEFRPSHEERSKMYKSNVRDQNEMRRKRREDEVQIRKNRRDEKFERNRQITVQRSLS.

This sequence belongs to the importin alpha family. As to quaternary structure, forms a complex with an importin beta subunit. As to expression, adult germline tissues.

The protein localises to the cytoplasm. Its function is as follows. Binds specifically and directly to substrates containing either a simple or bipartite NLS motif. Promotes docking of import substrates to the nuclear envelope. Seems to act as a cytosolic receptor for both simple and bipartite NLS motifs. This chain is Importin subunit alpha-1 (ima-1), found in Caenorhabditis elegans.